The following is a 287-amino-acid chain: Formamidopyrimidine-DNA glycosylase (287 aa).

Catalysis depends on proline 2, which acts as the Schiff-base intermediate with DNA. Residue glutamate 3 is the Proton donor of the active site. The active-site Proton donor; for beta-elimination activity is the lysine 58. Positions 104, 123, and 166 each coordinate DNA. An FPG-type zinc finger spans residues 251–287 (RVYDREGEPCPTPACKGVIAREVQAGRSTFFCPVCQV). The active-site Proton donor; for delta-elimination activity is the arginine 277.

This sequence belongs to the FPG family. Monomer. It depends on Zn(2+) as a cofactor.

The enzyme catalyses Hydrolysis of DNA containing ring-opened 7-methylguanine residues, releasing 2,6-diamino-4-hydroxy-5-(N-methyl)formamidopyrimidine.. It carries out the reaction 2'-deoxyribonucleotide-(2'-deoxyribose 5'-phosphate)-2'-deoxyribonucleotide-DNA = a 3'-end 2'-deoxyribonucleotide-(2,3-dehydro-2,3-deoxyribose 5'-phosphate)-DNA + a 5'-end 5'-phospho-2'-deoxyribonucleoside-DNA + H(+). Functionally, involved in base excision repair of DNA damaged by oxidation or by mutagenic agents. Acts as a DNA glycosylase that recognizes and removes damaged bases. Has a preference for oxidized purines, such as 7,8-dihydro-8-oxoguanine (8-oxoG). Has AP (apurinic/apyrimidinic) lyase activity and introduces nicks in the DNA strand. Cleaves the DNA backbone by beta-delta elimination to generate a single-strand break at the site of the removed base with both 3'- and 5'-phosphates. The polypeptide is Formamidopyrimidine-DNA glycosylase (Caulobacter vibrioides (strain ATCC 19089 / CIP 103742 / CB 15) (Caulobacter crescentus)).